The following is a 525-amino-acid chain: tRNA-splicing endonuclease subunit Sen54 (525 aa).

Methionine 1 is subject to N-acetylmethionine. A disordered region spans residues 1–46; sequence MEPEPEPGSVEVPAGRVLSASELRAARSRSQKLPQRSHGPKDFLPD. Positions 7–23 are enriched in low complexity; the sequence is PGSVEVPAGRVLSASEL. The residue at position 178 (serine 178) is a Phosphoserine. Residue tyrosine 180 is modified to Phosphotyrosine. Residues 220–232 show a composition bias toward low complexity; the sequence is LPPVSLAASSSPA. The segment at 220 to 273 is disordered; that stretch reads LPPVSLAASSSPACDQSSQYPEEKSQDSSPRQGSELPLQFLGSSEPCSDLARED.

The protein belongs to the SEN54 family. In terms of assembly, tRNA splicing endonuclease is a heterotetramer composed of TSEN2, TSEN15, TSEN34/LENG5 and TSEN54. tRNA splicing endonuclease complex also contains proteins of the pre-mRNA 3'-end processing machinery such as CLP1, CPSF1, CPSF4 and CSTF2.

The protein resides in the nucleus. Its subcellular location is the nucleolus. Its function is as follows. Non-catalytic subunit of the tRNA-splicing endonuclease complex, a complex responsible for identification and cleavage of the splice sites in pre-tRNA. It cleaves pre-tRNA at the 5' and 3' splice sites to release the intron. The products are an intron and two tRNA half-molecules bearing 2',3' cyclic phosphate and 5'-OH termini. There are no conserved sequences at the splice sites, but the intron is invariably located at the same site in the gene, placing the splice sites an invariant distance from the constant structural features of the tRNA body. The tRNA splicing endonuclease is also involved in mRNA processing via its association with pre-mRNA 3'-end processing factors, establishing a link between pre-tRNA splicing and pre-mRNA 3'-end formation, suggesting that the endonuclease subunits function in multiple RNA-processing events. This Mus musculus (Mouse) protein is tRNA-splicing endonuclease subunit Sen54 (Tsen54).